A 504-amino-acid polypeptide reads, in one-letter code: Protein DETOXIFICATION 38 (504 aa).

A run of 12 helical transmembrane segments spans residues 56–76 (LLLRLALPAILVYLINGGMGI), 90–110 (LAAASIGNSSFSLVYALMLGM), 139–159 (IVLALVGFPMTILYTFSYPIL), 170–190 (YMGSLYIAGLIPQIFAYAVYF), 208–228 (ISAAALVLQISLTWITVYAMG), 234–254 (IAYVLTISWWFIVGAQTFYVI), 273–295 (GLWSFFKLSAGSAVMICLELWYT), 316–336 (SICMSISALSFMVSVGFNAAV), 356–376 (TWTATFVSFVISVVEALVVIA), 401–421 (FLAVTIILNGIQPVLSGVAVG), 433–453 (IGCYYIVGIPIGCILGFTFNF), and 457–477 (GIWTGMIGGTLMQTLILLYVT).

This sequence belongs to the multi antimicrobial extrusion (MATE) (TC 2.A.66.1) family.

It localises to the membrane. This chain is Protein DETOXIFICATION 38, found in Arabidopsis thaliana (Mouse-ear cress).